Consider the following 414-residue polypeptide: Gamma-glutamyl phosphate reductase (414 aa).

This sequence belongs to the gamma-glutamyl phosphate reductase family.

It localises to the cytoplasm. The enzyme catalyses L-glutamate 5-semialdehyde + phosphate + NADP(+) = L-glutamyl 5-phosphate + NADPH + H(+). The protein operates within amino-acid biosynthesis; L-proline biosynthesis; L-glutamate 5-semialdehyde from L-glutamate: step 2/2. Catalyzes the NADPH-dependent reduction of L-glutamate 5-phosphate into L-glutamate 5-semialdehyde and phosphate. The product spontaneously undergoes cyclization to form 1-pyrroline-5-carboxylate. This Thermoanaerobacter sp. (strain X514) protein is Gamma-glutamyl phosphate reductase.